A 147-amino-acid polypeptide reads, in one-letter code: Phospholipase A2-beta (147 aa).

A signal peptide spans 1–28 (MMFRTSLMRFAAAFFAIVFVVLVGVARS). 6 cysteine pairs are disulfide-bonded: cysteine 31–cysteine 58, cysteine 35–cysteine 64, cysteine 40–cysteine 117, cysteine 51–cysteine 71, cysteine 70–cysteine 95, and cysteine 77–cysteine 88. Ca(2+) contacts are provided by tyrosine 50, glycine 52, and histidine 55. Histidine 74 is a catalytic residue. Residue aspartate 75 participates in Ca(2+) binding. Positions 144–147 (KTEL) match the Prevents secretion from ER motif.

It belongs to the phospholipase A2 family. The cofactor is Ca(2+). As to expression, ubiquitous but expressed at a low level. Detected in vascular tissues and in the guard cells. Predominantly detected in pollen.

It is found in the secreted. It localises to the endoplasmic reticulum. The catalysed reaction is a 1,2-diacyl-sn-glycero-3-phosphocholine + H2O = a 1-acyl-sn-glycero-3-phosphocholine + a fatty acid + H(+). Inhibited by aristolochic acid. Its function is as follows. PA2 catalyzes the calcium-dependent hydrolysis of the 2-acyl groups in 3-sn-phosphoglycerides. Releases lysophospholipids (LPLs) and free fatty acids (FFAs) from membrane phospholipids in response to hormones and other external stimuli. Regulates the process of cell elongation and plays important roles in shoot gravitropism by mediating auxin-induced cell elongation. Involved in stomatal opening in response to light. Plays a role in pollen development and germination and tube growth. This chain is Phospholipase A2-beta (PLA2-BETA), found in Arabidopsis thaliana (Mouse-ear cress).